The chain runs to 224 residues: MKFAVIQFPGSNCDIDLYEALHTVCGADVAYVPSKESSLDGFDAVMLPGGFSYGDYLRAGAIARFTNIMPAIVEMAKAGKPVFGTCNGFQILTEAGLLPGALKRNDSLKFVCKTVELEVANNDTIFTSEYQKGEKINLPIAHADGSFYADPETLQKIEDNGQVVFRYSKENPNGSLNNIAGITNERGNVLGMMPHPERAVEALLGNTDGLRLFKSILNHAEVKA.

Residues 2–224 (KFAVIQFPGS…SILNHAEVKA (223 aa)) form the Glutamine amidotransferase type-1 domain. C86 serves as the catalytic Nucleophile. Residues H195 and E197 contribute to the active site.

Part of the FGAM synthase complex composed of 1 PurL, 1 PurQ and 2 PurS subunits.

The protein localises to the cytoplasm. The enzyme catalyses N(2)-formyl-N(1)-(5-phospho-beta-D-ribosyl)glycinamide + L-glutamine + ATP + H2O = 2-formamido-N(1)-(5-O-phospho-beta-D-ribosyl)acetamidine + L-glutamate + ADP + phosphate + H(+). The catalysed reaction is L-glutamine + H2O = L-glutamate + NH4(+). Its pathway is purine metabolism; IMP biosynthesis via de novo pathway; 5-amino-1-(5-phospho-D-ribosyl)imidazole from N(2)-formyl-N(1)-(5-phospho-D-ribosyl)glycinamide: step 1/2. In terms of biological role, part of the phosphoribosylformylglycinamidine synthase complex involved in the purines biosynthetic pathway. Catalyzes the ATP-dependent conversion of formylglycinamide ribonucleotide (FGAR) and glutamine to yield formylglycinamidine ribonucleotide (FGAM) and glutamate. The FGAM synthase complex is composed of three subunits. PurQ produces an ammonia molecule by converting glutamine to glutamate. PurL transfers the ammonia molecule to FGAR to form FGAM in an ATP-dependent manner. PurS interacts with PurQ and PurL and is thought to assist in the transfer of the ammonia molecule from PurQ to PurL. This is Phosphoribosylformylglycinamidine synthase subunit PurQ from Lactobacillus delbrueckii subsp. bulgaricus (strain ATCC 11842 / DSM 20081 / BCRC 10696 / JCM 1002 / NBRC 13953 / NCIMB 11778 / NCTC 12712 / WDCM 00102 / Lb 14).